The chain runs to 358 residues: tRNA-specific 2-thiouridylase MnmA (358 aa).

ATP-binding positions include 7–14 (AMSGGVDS) and L33. The active-site Nucleophile is the C101. A disulfide bond links C101 and C197. Position 125 (G125) interacts with ATP. An interaction with tRNA region spans residues 147–149 (KDQ). C197 acts as the Cysteine persulfide intermediate in catalysis.

Belongs to the MnmA/TRMU family.

It is found in the cytoplasm. It carries out the reaction S-sulfanyl-L-cysteinyl-[protein] + uridine(34) in tRNA + AH2 + ATP = 2-thiouridine(34) in tRNA + L-cysteinyl-[protein] + A + AMP + diphosphate + H(+). Catalyzes the 2-thiolation of uridine at the wobble position (U34) of tRNA, leading to the formation of s(2)U34. The chain is tRNA-specific 2-thiouridylase MnmA from Rickettsia typhi (strain ATCC VR-144 / Wilmington).